Here is a 542-residue protein sequence, read N- to C-terminus: Chaperonin GroEL 2 (542 aa).

Residues T30–P33, K51, D87–T91, G415, and D496 contribute to the ATP site.

This sequence belongs to the chaperonin (HSP60) family. In terms of assembly, forms a cylinder of 14 subunits composed of two heptameric rings stacked back-to-back. Interacts with the co-chaperonin GroES.

It is found in the cytoplasm. It carries out the reaction ATP + H2O + a folded polypeptide = ADP + phosphate + an unfolded polypeptide.. Together with its co-chaperonin GroES, plays an essential role in assisting protein folding. The GroEL-GroES system forms a nano-cage that allows encapsulation of the non-native substrate proteins and provides a physical environment optimized to promote and accelerate protein folding. This chain is Chaperonin GroEL 2, found in Sinorhizobium fredii (strain NBRC 101917 / NGR234).